Here is a 160-residue protein sequence, read N- to C-terminus: Anaerobic nitrite reductase MHB1 (160 aa).

The region spanning glycine 8–lysine 157 is the Globin domain. A Homodimerization motif is present at residues glutamate 41–serine 45. Heme b-binding residues include serine 51, lysine 65, histidine 69, lysine 99, and histidine 104. The Homodimerization signature appears at aspartate 111–glutamate 123.

It belongs to the plant globin family. Homodimer. Requires heme b as cofactor. Root specific.

Its subcellular location is the nucleus matrix. The protein localises to the cytoplasm. The enzyme catalyses Fe(III)-heme b-[protein] + nitric oxide + H2O = Fe(II)-heme b-[protein] + nitrite + 2 H(+). Functionally, phytoglobin that reduces nitrite to nitric oxide (NO) under anoxic conditions (e.g. during flooding or in waterlogged soil) and upon root nodulation. Required for general plant development and during nodulation, especially for the onset of symbiosis. Monitors nitric oxide (NO) levels during early phase of the nitrogen-fixing symbiosis and buffers oxygen in functioning nodules. May not function as an oxygen storage or transport protein. Has an unusually high affinity for O(2) through a hexacoordinate heme iron because of a very low dissociation constant. In Medicago sativa (Alfalfa), this protein is Anaerobic nitrite reductase MHB1.